The following is a 255-amino-acid chain: Small ribosomal subunit protein uS2 (255 aa).

Positions 226–255 (QGVSNEEVAAEQNIDLDEKEKSEETEATEE) are disordered.

It belongs to the universal ribosomal protein uS2 family.

This chain is Small ribosomal subunit protein uS2, found in Staphylococcus aureus (strain JH1).